The chain runs to 225 residues: Uracil-DNA glycosylase (225 aa).

Asp65 serves as the catalytic Proton acceptor.

It belongs to the uracil-DNA glycosylase (UDG) superfamily. UNG family.

Its subcellular location is the cytoplasm. The enzyme catalyses Hydrolyzes single-stranded DNA or mismatched double-stranded DNA and polynucleotides, releasing free uracil.. In terms of biological role, excises uracil residues from the DNA which can arise as a result of misincorporation of dUMP residues by DNA polymerase or due to deamination of cytosine. This chain is Uracil-DNA glycosylase, found in Clostridium perfringens (strain 13 / Type A).